A 202-amino-acid chain; its full sequence is Peptide methionine sulfoxide reductase B2, chloroplastic (202 aa).

The N-terminal 63 residues, 1-63 (MAFNIITPGR…RRGFHGGRIV (63 aa)), are a transit peptide targeting the chloroplast. The MsrB domain maps to 77–198 (EEEWRAILSP…NSISLKFTPE (122 aa)). Residues cysteine 116, cysteine 119, cysteine 162, and cysteine 165 each coordinate Zn(2+). An intrachain disulfide couples cysteine 134 to cysteine 187. Residue cysteine 187 is the Nucleophile of the active site.

The protein belongs to the MsrB Met sulfoxide reductase family. Zn(2+) is required as a cofactor. In terms of tissue distribution, expressed in stems, young leaves, floral buds and flowers. Expressed at low levels in roots, mature leaves and siliques (at protein level).

The protein localises to the plastid. It is found in the chloroplast. It carries out the reaction L-methionyl-[protein] + [thioredoxin]-disulfide + H2O = L-methionyl-(R)-S-oxide-[protein] + [thioredoxin]-dithiol. Functionally, catalyzes the reduction of methionine sulfoxide (MetSO) to methionine in proteins. Specifically reduces the MetSO R-enantiomer. Plays a protective role against oxidative stress by restoring activity to proteins that have been inactivated by methionine oxidation. May play an essential function in association with MSRB1 in maintaining vegetative growth during environmental constraints, through the preservation of photosynthetic antennae. MSRB1 and MSRB2 account for most of the leaf peptide MSR capacity. This chain is Peptide methionine sulfoxide reductase B2, chloroplastic, found in Arabidopsis thaliana (Mouse-ear cress).